Here is a 168-residue protein sequence, read N- to C-terminus: Ribosome maturation factor RimM (168 aa).

A PRC barrel domain is found at 93–167 (ENEFYQSDLV…YITLNMPEFI (75 aa)).

This sequence belongs to the RimM family. In terms of assembly, binds ribosomal protein uS19.

Its subcellular location is the cytoplasm. An accessory protein needed during the final step in the assembly of 30S ribosomal subunit, possibly for assembly of the head region. Essential for efficient processing of 16S rRNA. May be needed both before and after RbfA during the maturation of 16S rRNA. It has affinity for free ribosomal 30S subunits but not for 70S ribosomes. The chain is Ribosome maturation factor RimM from Wolbachia sp. subsp. Brugia malayi (strain TRS).